Here is a 541-residue protein sequence, read N- to C-terminus: Multidrug transporter protein MdtP (541 aa).

The next 14 membrane-spanning stretches (helical) occupy residues 14-34 (LLIT…TIVG), 40-60 (IVGD…YLLT), 79-99 (IVYV…GMAN), 112-132 (GIGG…LFTG), 141-161 (VFGA…GWIV), 168-188 (WVFY…ARGL), 201-221 (IAGI…LSFG), 229-249 (SWQI…FIIV), 273-293 (LIGF…PFFM), 307-327 (IMTP…QLVY), 329-349 (IGIK…FLLL), 359-379 (LVAT…MPIL), 401-420 (FFRS…VMNA), and 492-512 (LHSV…FTLF).

Belongs to the major facilitator superfamily. EmrB family.

The protein localises to the cell membrane. Functionally, multidrug efflux transporter. Contributes to resistance to several antibiotics, including fusidic acid, novobiocin, streptomycin and actinomycin, possibly by pumping these structurally unrelated antibiotics out of cells. The sequence is that of Multidrug transporter protein MdtP from Bacillus subtilis (strain 168).